The following is a 1040-amino-acid chain: BEM1-interacting protein 2 (1040 aa).

Residues 1–39 (MSNDREVPTLSQLNTTVSRDKDVSDTLSPDFDSKGSATG) form a disordered region. Residues 8 to 17 (PTLSQLNTTV) are compositionally biased toward polar residues. Phosphoserine is present on residues serine 18, serine 24, and serine 28. The SH3 domain occupies 43-107 (GNFPMYIAIN…PVVFTQKITV (65 aa)). Residues 266 to 330 (WSPEEITAYF…FKEIEKIKEA (65 aa)) form the SAM domain. Disordered stretches follow at residues 365–412 (YRGH…SQEA), 437–478 (VSPR…WQSP), and 491–744 (IDQY…ARPV). Over residues 372 to 397 (TSQSLEDLPSQQNFIPTPRNTRNSSA) the composition is skewed to polar residues. Residues 444 to 457 (KPPSYPSPAQPPKS) show a composition bias toward pro residues. At serine 450 the chain carries Phosphoserine. Residues 459–478 (LLNNTRTSPSPAQLYSWQSP) show a composition bias toward polar residues. The segment covering 495–505 (SSSDSNFNSRS) has biased composition (low complexity). A phosphoserine mark is found at serine 519, serine 523, and serine 546. The segment covering 557-570 (SSDRKSSCSSHEEE) has biased composition (basic and acidic residues). Polar residues predominate over residues 573–598 (QETMNTFERPTSSIYADGSTIASISN). The span at 600 to 609 (KLAHEKEGKK) shows a compositional bias: basic and acidic residues. Over residues 632-648 (LKRSSSASRTSSFKKSS) the composition is skewed to low complexity. Serine 652 carries the phosphoserine modification. Residues 654-684 (FRQQFTDNAARSSSPEENPITSMPSEKNSSP) show a composition bias toward polar residues. A compositionally biased stretch (basic residues) spans 690–701 (SSKKSRSKRRSV). Residues 702–732 (SAKEAEIFTETVKDDKNKRSASEAIKGETLK) show a composition bias toward basic and acidic residues. One can recognise a PH domain in the interval 768–887 (DADFSGWMSK…WMAALIKTTI (120 aa)). A compositionally biased stretch (low complexity) spans 943–957 (QLQQQQHDNNQGQAD). Disordered regions lie at residues 943–986 (QLQQ…NNTT) and 1007–1040 (VARNSSMRGTEKKGKFSTEEDYFGDNSKHKTDKI). Polar residues predominate over residues 973–986 (TISTPNLSSANNTT). Residues 1015–1024 (GTEKKGKFST) are compositionally biased toward basic and acidic residues.

In terms of assembly, interacts with BEM1. Interacts with TOS7.

It localises to the bud. Its subcellular location is the bud neck. In terms of biological role, protein involved in bud formation. Functions redundantly with BOI1 to promote the fusion of secretory vesicles with the plasma membrane at sites of polarized growth. Acts as an abscission inhibitor during cytokinesis in response to chromatin bridges. This Saccharomyces cerevisiae (strain ATCC 204508 / S288c) (Baker's yeast) protein is BEM1-interacting protein 2.